The sequence spans 195 residues: Flagellar transcriptional regulator FlhC (195 aa).

4 residues coordinate Zn(2+): cysteine 137, cysteine 140, cysteine 157, and cysteine 160. Positions 165–195 (RAGSARRKTTTRKAVAPTHKTTAASRKAVVA) are disordered.

This sequence belongs to the FlhC family. As to quaternary structure, heterohexamer composed of two FlhC and four FlhD subunits. Each FlhC binds a FlhD dimer, forming a heterotrimer, and a hexamer assembles by dimerization of two heterotrimers. It depends on Zn(2+) as a cofactor.

The protein localises to the cytoplasm. Functions in complex with FlhD as a master transcriptional regulator that regulates transcription of several flagellar and non-flagellar operons by binding to their promoter region. Activates expression of class 2 flagellar genes, including fliA, which is a flagellum-specific sigma factor that turns on the class 3 genes. Also regulates genes whose products function in a variety of physiological pathways. In Thauera aminoaromatica, this protein is Flagellar transcriptional regulator FlhC.